The primary structure comprises 1070 residues: DNA-directed RNA polymerase subunit beta (1070 aa).

Belongs to the RNA polymerase beta chain family. In plastids the minimal PEP RNA polymerase catalytic core is composed of four subunits: alpha, beta, beta', and beta''. When a (nuclear-encoded) sigma factor is associated with the core the holoenzyme is formed, which can initiate transcription.

The protein resides in the plastid. It localises to the chloroplast. The catalysed reaction is RNA(n) + a ribonucleoside 5'-triphosphate = RNA(n+1) + diphosphate. Functionally, DNA-dependent RNA polymerase catalyzes the transcription of DNA into RNA using the four ribonucleoside triphosphates as substrates. The chain is DNA-directed RNA polymerase subunit beta from Solanum lycopersicum (Tomato).